A 159-amino-acid chain; its full sequence is Ribosomal RNA large subunit methyltransferase H (159 aa).

Residues Leu76, Gly108, and 127-132 each bind S-adenosyl-L-methionine; that span reads FGLLTL.

This sequence belongs to the RNA methyltransferase RlmH family. As to quaternary structure, homodimer.

The protein resides in the cytoplasm. It carries out the reaction pseudouridine(1915) in 23S rRNA + S-adenosyl-L-methionine = N(3)-methylpseudouridine(1915) in 23S rRNA + S-adenosyl-L-homocysteine + H(+). Its function is as follows. Specifically methylates the pseudouridine at position 1915 (m3Psi1915) in 23S rRNA. The protein is Ribosomal RNA large subunit methyltransferase H of Leuconostoc mesenteroides subsp. mesenteroides (strain ATCC 8293 / DSM 20343 / BCRC 11652 / CCM 1803 / JCM 6124 / NCDO 523 / NBRC 100496 / NCIMB 8023 / NCTC 12954 / NRRL B-1118 / 37Y).